An 836-amino-acid polypeptide reads, in one-letter code: Probable RING finger protein 207 homolog (836 aa).

The segment at 8 to 42 (CTICKNDFEEPILFSCQHTTCRKCSNGSPSCKTCS) adopts an RING-type zinc-finger fold. A B box-type 1; atypical zinc finger spans residues 68–115 (EEMEQCANCEQITLPMFYCETCQQSLCLACRNVTHQARMFSSHKIISS). The Zn(2+) site is built by Cys73, Cys76, Cys97, and His102. The B box-type 2; degenerate zinc-finger motif lies at 122 to 164 (YSSSLCKDHNEPYILYCSDVRKLVCIQCFNGRPLEERHSFISI). A coiled-coil region spans residues 527–557 (QNRIMAIEKEEENRRLNQEAKKKEELAGQSA). A compositionally biased stretch (basic and acidic residues) spans 540-552 (RRLNQEAKKKEEL). A disordered region spans residues 540 to 571 (RRLNQEAKKKEELAGQSAAMKSLKHGKTKRKE). Basic residues predominate over residues 561-571 (SLKHGKTKRKE).

The protein is Probable RING finger protein 207 homolog of Caenorhabditis briggsae.